The following is a 338-amino-acid chain: Histone acetyltransferase SAS2 (338 aa).

Polar residues predominate over residues 1–15; the sequence is MARSLSQSLTATTQK. The tract at residues 1-31 is disordered; the sequence is MARSLSQSLTATTQKLKGKKNGGKGKNKPSA. Over residues 16-31 the composition is skewed to basic residues; the sequence is LKGKKNGGKGKNKPSA. The 294-residue stretch at 45–338 folds into the MYST-type HAT domain; it reads LNERNIRQIQ…LKDEYLLIDD (294 aa). The segment at 100–126 adopts a C2HC MYST-type zinc-finger fold; sequence LFVCEYCFKYTDDQTRFVGHVASCPFQ. N6-acetyllysine; by autocatalysis is present on K168. Acetyl-CoA is bound by residues 209 to 211 and 216 to 222; these read ILI and QRRGLGL. Residue E242 is the Proton donor/acceptor of the active site. Positions 246 and 323 each coordinate acetyl-CoA.

The protein belongs to the MYST (SAS/MOZ) family. Interacts with CAC1. Component of the SAS complex, at least composed of SAS2, SAS4 and SAS5. These three proteins constitute the core of the complex and are sufficient to acetylate histones. SAS4 is essential for HAT activity of the complex, while SAS5 is required for maxiaml HAT activity. Post-translationally, autoacetylation at Lys-168 is required for proper function.

It is found in the cytoplasm. The protein resides in the nucleus. It carries out the reaction L-lysyl-[protein] + acetyl-CoA = N(6)-acetyl-L-lysyl-[protein] + CoA + H(+). Its function is as follows. Histone acetyltransferase (HAT) subunit of the SAS complex, a multiprotein complex that acetylates 'Lys-16' of histone H4 and 'Lys-14' of histone H3. The SAS complex is however unable to acetylate nucleosomal histones. The complex is involved in transcriptional silencing at telomeres and at HML locus. Also involved in rDNA silencing and G0 control. The polypeptide is Histone acetyltransferase SAS2 (SAS2) (Saccharomyces cerevisiae (strain ATCC 204508 / S288c) (Baker's yeast)).